Reading from the N-terminus, the 275-residue chain is Methylglyoxal reductase DkgA (275 aa).

The active-site Proton donor is Tyr51. A substrate-binding site is contributed by His107. Position 187 to 241 (187 to 241 (SPLAQGGKGVFDQKVIRDLADKYGKTPAQIVIRWHLDSGLVVIPKSVTPSRIAEN)) interacts with NADP(+).

This sequence belongs to the aldo/keto reductase family. Monomer.

It localises to the cytoplasm. The catalysed reaction is hydroxyacetone + NADP(+) = methylglyoxal + NADPH + H(+). It carries out the reaction a primary alcohol + NADP(+) = an aldehyde + NADPH + H(+). It catalyses the reaction 2-dehydro-L-idonate + NADP(+) = 2,5-didehydro-D-gluconate + NADPH + H(+). Functionally, aldo-keto reductase that significantly contributes to cellular methylglyoxal detoxification by catalyzing the NADPH-dependent conversion of methylglyoxal to acetol. It also exhibits fairly high activity with glyoxal. Shows broad specificity and can use aromatic aldehydes such as 4-nitrobenzaldehyde, 3-nitrobenzaldehyde and benzaldehyde, and phenylglyoxal. Shows beta-keto ester reductase activity toward ethyl acetoacetate and a variety of 2-substituted derivatives. Also catalyzes the reduction of 2,5-diketo-D-gluconic acid (25DKG) to 2-keto-L-gulonic acid (2KLG) and could be involved in ketogluconate metabolism. However, the specific activity of the enzyme toward 2,5-diketo-D-gluconate was reported to be almost 400-fold lower than its activity toward methylglyoxal. Can catalyze in vitro the NADPH-dependent reduction of furfural, a natural product of lignocellulosic decomposition, to the less toxic product, furfuryl alcohol. However, it is unlikely that furfural is a physiological substrate. This chain is Methylglyoxal reductase DkgA, found in Escherichia coli (strain K12).